The primary structure comprises 80 residues: Exodeoxyribonuclease 7 small subunit (80 aa).

This sequence belongs to the XseB family. As to quaternary structure, heterooligomer composed of large and small subunits.

The protein resides in the cytoplasm. It carries out the reaction Exonucleolytic cleavage in either 5'- to 3'- or 3'- to 5'-direction to yield nucleoside 5'-phosphates.. Its function is as follows. Bidirectionally degrades single-stranded DNA into large acid-insoluble oligonucleotides, which are then degraded further into small acid-soluble oligonucleotides. The sequence is that of Exodeoxyribonuclease 7 small subunit from Aliivibrio fischeri (strain ATCC 700601 / ES114) (Vibrio fischeri).